The chain runs to 219 residues: Thymidylate kinase (219 aa).

7–14 (GIDGAGKS) serves as a coordination point for ATP.

This sequence belongs to the thymidylate kinase family.

It catalyses the reaction dTMP + ATP = dTDP + ADP. In terms of biological role, phosphorylation of dTMP to form dTDP in both de novo and salvage pathways of dTTP synthesis. The protein is Thymidylate kinase of Chlorobium phaeobacteroides (strain DSM 266 / SMG 266 / 2430).